Consider the following 173-residue polypeptide: uncharacterized protein (173 aa).

This is an uncharacterized protein from Acanthamoeba polyphaga (Amoeba).